We begin with the raw amino-acid sequence, 445 residues long: UDP-N-acetylmuramate--L-alanine ligase (445 aa).

113–119 (GSHGKTS) is a binding site for ATP.

The protein belongs to the MurCDEF family.

The protein localises to the cytoplasm. The catalysed reaction is UDP-N-acetyl-alpha-D-muramate + L-alanine + ATP = UDP-N-acetyl-alpha-D-muramoyl-L-alanine + ADP + phosphate + H(+). It participates in cell wall biogenesis; peptidoglycan biosynthesis. Functionally, cell wall formation. The polypeptide is UDP-N-acetylmuramate--L-alanine ligase (Enterococcus faecalis (strain ATCC 700802 / V583)).